The following is a 94-amino-acid chain: Putative pterin-4-alpha-carbinolamine dehydratase (94 aa).

It belongs to the pterin-4-alpha-carbinolamine dehydratase family.

The enzyme catalyses (4aS,6R)-4a-hydroxy-L-erythro-5,6,7,8-tetrahydrobiopterin = (6R)-L-erythro-6,7-dihydrobiopterin + H2O. In Mycolicibacterium smegmatis (strain ATCC 700084 / mc(2)155) (Mycobacterium smegmatis), this protein is Putative pterin-4-alpha-carbinolamine dehydratase.